We begin with the raw amino-acid sequence, 467 residues long: AT-rich interactive domain-containing protein cfi-1 (467 aa).

Positions 1–56 (MSVRIDEPQLFVSMSKEPTQETVNVGGHHDDSSSNCDERVDDQTEEQKSPPASPDL) are disordered. Residues 27-48 (GHHDDSSSNCDERVDDQTEEQK) are compositionally biased toward basic and acidic residues. One can recognise an ARID domain in the interval 181–273 (DVKRKEWLDD…YLYDYECEKE (93 aa)). Positions 356-464 (AILEAHQRNL…GVLFALDETV (109 aa)) constitute an REKLES domain. The segment at 383–441 (LTACSNGNGGNIHNSGRESTSSNDSDIPAKRPKLENDVKTNGASSMRISTKHSDNSKTS) is disordered. Positions 409–420 (IPAKRPKLENDV) are enriched in basic and acidic residues. Positions 421 to 430 (KTNGASSMRI) are enriched in polar residues.

As to expression, present in IL2 and URA neurons, and in AVD and PVC interneurons. Present in muscles from head and pharynx (at protein level).

It localises to the nucleus. Transcription factor. Regulates neuronal subtype identity. Involved in motor neuron fate determination and maintenance, acting as a transcriptional repressor to counteract gene activation by transcription factor unc-3 in a subset of motor neurons. Probably acts by binding to specific promoter elements. Promotes differentiation of URA sensory neurons and prevents them from expressing male-specific CEM neuronal features. Promotes differentiation of AVD and PVC interneurons and their glutamate receptor expression. The polypeptide is AT-rich interactive domain-containing protein cfi-1 (cfi-1) (Caenorhabditis elegans).